We begin with the raw amino-acid sequence, 231 residues long: Large ribosomal subunit protein uL1 (231 aa).

It belongs to the universal ribosomal protein uL1 family. In terms of assembly, part of the 50S ribosomal subunit.

Functionally, binds directly to 23S rRNA. The L1 stalk is quite mobile in the ribosome, and is involved in E site tRNA release. Protein L1 is also a translational repressor protein, it controls the translation of the L11 operon by binding to its mRNA. The polypeptide is Large ribosomal subunit protein uL1 (Chlorobaculum tepidum (strain ATCC 49652 / DSM 12025 / NBRC 103806 / TLS) (Chlorobium tepidum)).